The primary structure comprises 197 residues: Rac-like GTP-binding protein 6 (197 aa).

13–20 (GDGAVGKT) lines the GTP pocket. The Effector region motif lies at 35–43 (YVPTVFDNF). GTP is bound by residues 60-64 (DTAGQ) and 118-121 (TKLD). Cys-194 carries the cysteine methyl ester modification. Cys-194 is lipidated: S-geranylgeranyl cysteine. Residues 195–197 (SIL) constitute a propeptide, removed in mature form.

This sequence belongs to the small GTPase superfamily. Rho family.

It localises to the cytoplasm. The protein localises to the membrane. Functionally, inactive GDP-bound Rho GTPases reside in the cytosol, are found in a complex with Rho GDP-dissociation inhibitors (Rho GDIs), and are released from the GDI protein in order to translocate to membranes upon activation. The sequence is that of Rac-like GTP-binding protein 6 (RAC6) from Oryza sativa subsp. japonica (Rice).